We begin with the raw amino-acid sequence, 530 residues long: MGAAASRRRALRSEAMSSVAAKVRAARAFGEYLSQSHPENRNGADHLLADAYSGHDGSPEMQPAPQNKRRLSLVSNGCYEGSLSEEPSIRKPAGEGPQPRVYTISGEPALLPSPEAEAIELAVVKGRRQRHPHHHSQPLRASPGGSREDVSRPCQSWAGSRQGSKECPGCAQLAPGPTPRAFGLDQPPLPETSGRRKKLERMYSVDRVSDDIPIRTWFPKENLFSFQTATTTMQAISVFRGYAERKRRKRENDSASVIQRNFRKHLRMVGSRRVKAQTFAERRERSFSRSWSDPTPMKADTSHDSRDSSDLQSSHCTLDEAFEDLDWDTEKGLEAVACDTEGFVPPKVMLISSKVPKAEYIPTIIRRDDPSIIPILYDHEHATFEDILEEIERKLNVYHKGAKIWKMLIFCQGGPGHLYLLKNKVATFAKVEKEEDMIHFWKRLSRLMSKVNPEPNVIHIMGCYILGNPNGEKLFQNLRTLMTPYRVTFESPLELSAQGKQMIETYFDFRLYRLWKSRQHSKLLDFDDVL.

Gly-2 carries the N-myristoyl glycine lipid modification. Residues 2 to 233 form a necessary and sufficient to elicit dendritic processes and synaptic contacts region; that stretch reads GAAASRRRAL…FSFQTATTTM (232 aa). Disordered stretches follow at residues 34 to 67 and 125 to 197; these read SQSH…APQN and KGRR…GRRK. Basic and acidic residues predominate over residues 38–48; it reads PENRNGADHLL. Residues 125–137 show a composition bias toward basic residues; that stretch reads KGRRQRHPHHHSQ. Polar residues predominate over residues 153–162; the sequence is PCQSWAGSRQ. A Phosphoserine modification is found at Ser-204. Positions 247–250 match the Nuclear localization signal motif; sequence RRKR. Residues 285–312 are disordered; that stretch reads RSFSRSWSDPTPMKADTSHDSRDSSDLQ. 2 positions are modified to phosphoserine: Ser-290 and Ser-292. Positions 300–309 are enriched in basic and acidic residues; that stretch reads DTSHDSRDSS.

Belongs to the NSMF family. In terms of assembly, interacts with KPNA1; the interaction occurs in a calcium-independent manner after synaptic NMDA receptor stimulation and is required for nuclear import of NSMF but is competed by CABP1. Interacts (via the central NLS-containing motif region) with CABP1 (via EF-hands 1 and 2); the interaction occurs in a calcium-dependent manner after synaptic NMDA receptor stimulation and prevents the nuclear import of NSMF. Cannot be competed by calmodulin. Post-translationally, proteolytically processed after NMDA receptor activation. Cleaved in a calcium-dependent and calpain-sensitive manner. Calpain cleavage is essential for the translocation process from dendrites to the nucleus. In terms of tissue distribution, highly expressed in adult and fetal brain. Weakly expressed in heart, liver, spleen, testis, small intestine, skeletal muscle, peripheral white blood cells and kidney.

It is found in the nucleus. Its subcellular location is the nucleus envelope. The protein resides in the nucleus membrane. The protein localises to the nucleus matrix. It localises to the cytoplasm. It is found in the cell cortex. Its subcellular location is the cytoskeleton. The protein resides in the cell membrane. The protein localises to the cell projection. It localises to the dendrite. It is found in the synapse. Its subcellular location is the synaptosome. The protein resides in the postsynaptic density. The protein localises to the membrane. In terms of biological role, couples NMDA-sensitive glutamate receptor signaling to the nucleus and triggers long-lasting changes in the cytoarchitecture of dendrites and spine synapse processes. Part of the cAMP response element-binding protein (CREB) shut-off signaling pathway. Stimulates outgrowth of olfactory axons and migration of gonadotropin-releasing hormone (GnRH) and luteinizing-hormone-releasing hormone (LHRH) neuronal cells. The chain is NMDA receptor synaptonuclear signaling and neuronal migration factor (NSMF) from Homo sapiens (Human).